Reading from the N-terminus, the 632-residue chain is FAD-binding monooxygenase ausB (632 aa).

Positions 1 to 50 (MASAPEVESVKTPDPASTKTQHTSIAEIHTADQTWNNESNTRLPPNHRHH) are disordered. Composition is skewed to polar residues over residues 15-24 (PASTKTQHTS) and 31-43 (ADQTWNNESNTRL). Residues 116–119 (TWYW), 128–129 (DI), and Y134 contribute to the FAD site. NADP(+) is bound at residue 126–128 (MCD). NADP(+)-binding positions include 269–275 (TGSTAIQ) and 292–293 (RT).

Belongs to the FAD-binding monooxygenase family. Requires FAD as cofactor.

It catalyses the reaction protoaustinoid A + AH2 + O2 = berkeleyone A + A + H2O. Its pathway is secondary metabolite biosynthesis; terpenoid biosynthesis. Functionally, FAD-binding monooxygenase; part of the gene cluster that mediates the biosynthesis of calidodehydroaustin, a fungal meroterpenoid. The first step of the pathway is the synthesis of 3,5-dimethylorsellinic acid by the polyketide synthase ausA. 3,5-dimethylorsellinic acid is then prenylated by the polyprenyl transferase ausN. Further epoxidation by the FAD-dependent monooxygenase ausM and cyclization by the probable terpene cyclase ausL lead to the formation of protoaustinoid A. Protoaustinoid A is then oxidized to spiro-lactone preaustinoid A3 by the combined action of the FAD-binding monooxygenases ausB and ausC, and the dioxygenase ausE. Acid-catalyzed keto-rearrangement and ring contraction of the tetraketide portion of preaustinoid A3 by ausJ lead to the formation of preaustinoid A4. The aldo-keto reductase ausK, with the help of ausH, is involved in the next step by transforming preaustinoid A4 into isoaustinone which is in turn hydroxylated by the P450 monooxygenase ausI to form austinolide. The cytochrome P450 monooxygenase ausG modifies austinolide to austinol. Austinol is further acetylated to austin by the O-acetyltransferase ausP, which spontaneously changes to dehydroaustin. The cytochrome P450 monooxygenase ausR then converts dehydroaustin is into 7-dehydrodehydroaustin. The hydroxylation catalyzed by ausR permits the O-acetyltransferase ausQ to add an additional acetyl group to the molecule, leading to the formation of acetoxydehydroaustin. The short chain dehydrogenase ausT catalyzes the reduction of the double bond present between carbon atoms 1 and 2 to convert 7-dehydrodehydroaustin into 1,2-dihydro-7-hydroxydehydroaustin. AusQ catalyzes not only an acetylation reaction but also the addition of the PKS ausV diketide product to 1,2-dihydro-7-hydroxydehydroaustin, forming precalidodehydroaustin. Finally, the iron/alpha-ketoglutarate-dependent dioxygenase converts precalidodehydroaustin into calidodehydroaustin. This chain is FAD-binding monooxygenase ausB, found in Aspergillus calidoustus.